Reading from the N-terminus, the 262-residue chain is GTP cyclohydrolase 1 type 2 homolog (262 aa).

A divalent metal cation-binding residues include His65, Asp102, His222, and Glu225.

It belongs to the GTP cyclohydrolase I type 2/NIF3 family. In terms of assembly, homohexamer.

This chain is GTP cyclohydrolase 1 type 2 homolog, found in Streptococcus pyogenes serotype M3 (strain ATCC BAA-595 / MGAS315).